We begin with the raw amino-acid sequence, 210 residues long: NADH dehydrogenase [ubiquinone] iron-sulfur protein 8, mitochondrial (210 aa).

The transit peptide at 1 to 34 (MRCLTTPMLLRALAQAARAGPPGGRSLHSSAVAA) directs the protein to the mitochondrion. 4Fe-4S ferredoxin-type domains are found at residues 102–131 (RRYP…IEAE) and 141–170 (TRYD…EGPN). Positions 111, 114, 117, 121, 150, 153, 156, and 160 each coordinate [4Fe-4S] cluster.

This sequence belongs to the complex I 23 kDa subunit family. Core subunit of respiratory chain NADH dehydrogenase (Complex I) which is composed of 45 different subunits. This is a component of the iron-sulfur (IP) fragment of the enzyme. Interacts with RAB5IF. The cofactor is [4Fe-4S] cluster. In terms of tissue distribution, expressed in all tissues with the highest level in heart and skeletal muscle and the lowest level in lung.

Its subcellular location is the mitochondrion inner membrane. It carries out the reaction a ubiquinone + NADH + 5 H(+)(in) = a ubiquinol + NAD(+) + 4 H(+)(out). Its function is as follows. Core subunit of the mitochondrial membrane respiratory chain NADH dehydrogenase (Complex I) which catalyzes electron transfer from NADH through the respiratory chain, using ubiquinone as an electron acceptor. Essential for the catalytic activity and assembly of complex I. The protein is NADH dehydrogenase [ubiquinone] iron-sulfur protein 8, mitochondrial (NDUFS8) of Homo sapiens (Human).